The sequence spans 419 residues: Inositol-tetrakisphosphate 1-kinase (419 aa).

Lys18 serves as a coordination point for 1D-myo-inositol 1,3,4-trisphosphate. 2 residues coordinate ATP: Arg106 and Lys157. The 209-residue stretch at 117-325 (EAYMKDDRIC…IASVLQGQSS (209 aa)) folds into the ATP-grasp domain. Positions 167 and 199 each coordinate 1D-myo-inositol 1,3,4-trisphosphate. Residues 188 to 199 (QNFINHNAVLYK), Ser214, Ser232, and Ser236 each bind ATP. The Mg(2+) site is built by Asp281, Asp295, and Asn297. Residue Asn297 coordinates 1D-myo-inositol 1,3,4-trisphosphate. Lys388 carries the post-translational modification N6-acetyllysine; by EP300 and CREBBP. Ser401 bears the Phosphoserine mark. Lys415 carries the N6-acetyllysine; by EP300 and CREBBP modification.

Belongs to the ITPK1 family. As to quaternary structure, monomer. Interacts with GPS1/COPS1. It depends on Mg(2+) as a cofactor. Acetylation by EP300 and CREBBP destabilizes ITPK1, and down-regulates enzymatic activity. Deacetylated by SIRT1.

The catalysed reaction is 1D-myo-inositol 3,4,5,6-tetrakisphosphate + ATP = 1D-myo-inositol 1,3,4,5,6-pentakisphosphate + ADP + H(+). It catalyses the reaction 1D-myo-inositol 1,3,4-trisphosphate + ATP = 1D-myo-inositol 1,3,4,5-tetrakisphosphate + ADP + H(+). The enzyme catalyses 1D-myo-inositol 1,3,4-trisphosphate + ATP = 1D-myo-inositol 1,3,4,6-tetrakisphosphate + ADP + H(+). It carries out the reaction 1D-myo-inositol 3,4,6-trisphosphate + ATP = 1D-myo-inositol 1,3,4,6-tetrakisphosphate + ADP + H(+). The catalysed reaction is 1D-myo-inositol 1,3,4-trisphosphate + 1D-myo-inositol 1,3,4,5,6-pentakisphosphate = 1D-myo-inositol 3,4,5,6-tetrakisphosphate + 1D-myo-inositol 1,3,4,6-tetrakisphosphate. It catalyses the reaction 1D-myo-inositol 1,3,4-trisphosphate + 1D-myo-inositol 1,3,4,5,6-pentakisphosphate = 1D-myo-inositol 3,4,5,6-tetrakisphosphate + 1D-myo-inositol 1,3,4,5-tetrakisphosphate. In terms of biological role, kinase that can phosphorylate various inositol polyphosphate such as Ins(3,4,5,6)P4 or Ins(1,3,4)P3. Phosphorylates Ins(3,4,5,6)P4 at position 1 to form Ins(1,3,4,5,6)P5. This reaction is thought to have regulatory importance, since Ins(3,4,5,6)P4 is an inhibitor of plasma membrane Ca(2+)-activated Cl(-) channels, while Ins(1,3,4,5,6)P5 is not. Also phosphorylates Ins(1,3,4)P3 on O-5 and O-6 to form Ins(1,3,4,6)P4, an essential molecule in the hexakisphosphate (InsP6) pathway. Also acts as an inositol polyphosphate phosphatase that dephosphorylates Ins(1,3,4,5)P4 and Ins(1,3,4,6)P4 to Ins(1,3,4)P3, and Ins(1,3,4,5,6)P5 to Ins(3,4,5,6)P4. May also act as an isomerase that interconverts the inositol tetrakisphosphate isomers Ins(1,3,4,5)P4 and Ins(1,3,4,6)P4 in the presence of ADP and magnesium. Probably acts as the rate-limiting enzyme of the InsP6 pathway. Modifies TNF-alpha-induced apoptosis by interfering with the activation of TNFRSF1A-associated death domain. Plays an important role in MLKL-mediated necroptosis. Produces highly phosphorylated inositol phosphates such as inositolhexakisphosphate (InsP6) which bind to MLKL mediating the release of an N-terminal auto-inhibitory region leading to its activation. Essential for activated phospho-MLKL to oligomerize and localize to the cell membrane during necroptosis. This chain is Inositol-tetrakisphosphate 1-kinase (ITPK1), found in Bos taurus (Bovine).